The chain runs to 84 residues: Cytochrome b559 subunit alpha (84 aa).

Residues 22 to 36 (VIHSITIPSLFVAGW) form a helical membrane-spanning segment. Residue His24 coordinates heme.

This sequence belongs to the PsbE/PsbF family. In terms of assembly, heterodimer of an alpha subunit and a beta subunit. PSII is composed of 1 copy each of membrane proteins PsbA, PsbB, PsbC, PsbD, PsbE, PsbF, PsbH, PsbI, PsbJ, PsbK, PsbL, PsbM, PsbT, PsbX, PsbY, PsbZ, Psb30/Ycf12, at least 3 peripheral proteins of the oxygen-evolving complex and a large number of cofactors. It forms dimeric complexes. Heme b is required as a cofactor.

The protein resides in the plastid. It localises to the chloroplast thylakoid membrane. Functionally, this b-type cytochrome is tightly associated with the reaction center of photosystem II (PSII). PSII is a light-driven water:plastoquinone oxidoreductase that uses light energy to abstract electrons from H(2)O, generating O(2) and a proton gradient subsequently used for ATP formation. It consists of a core antenna complex that captures photons, and an electron transfer chain that converts photonic excitation into a charge separation. The sequence is that of Cytochrome b559 subunit alpha from Gracilaria tenuistipitata var. liui (Red alga).